The primary structure comprises 144 residues: Large ribosomal subunit protein uL16 (144 aa).

Belongs to the universal ribosomal protein uL16 family. In terms of assembly, part of the 50S ribosomal subunit.

Functionally, binds 23S rRNA and is also seen to make contacts with the A and possibly P site tRNAs. The polypeptide is Large ribosomal subunit protein uL16 (Natranaerobius thermophilus (strain ATCC BAA-1301 / DSM 18059 / JW/NM-WN-LF)).